The chain runs to 190 residues: Adenylate kinase (190 aa).

Residue 11–16 (GSGKGT) coordinates ATP. Residues 31–60 (STGDVLRGEMKAETELGKIAKDYIEKGQLV) form an NMP region. AMP is bound by residues Thr-32, Arg-37, 58–60 (QLV), 86–89 (GFPR), and Gln-93. Residues 127-137 (ERGKVSGRSDD) form an LID region. Position 128 (Arg-128) interacts with ATP. AMP is bound by residues Arg-134 and Arg-145. An ATP-binding site is contributed by Gly-173.

This sequence belongs to the adenylate kinase family. In terms of assembly, monomer.

It is found in the cytoplasm. The enzyme catalyses AMP + ATP = 2 ADP. It participates in purine metabolism; AMP biosynthesis via salvage pathway; AMP from ADP: step 1/1. Its function is as follows. Catalyzes the reversible transfer of the terminal phosphate group between ATP and AMP. Plays an important role in cellular energy homeostasis and in adenine nucleotide metabolism. The polypeptide is Adenylate kinase (Parabacteroides distasonis (strain ATCC 8503 / DSM 20701 / CIP 104284 / JCM 5825 / NCTC 11152)).